We begin with the raw amino-acid sequence, 242 residues long: Caffeoyl-CoA O-methyltransferase (242 aa).

Lys-16 is a binding site for substrate. S-adenosyl-L-methionine-binding positions include Thr-58, Glu-80, 82–83 (GV), Ser-88, Asp-106, and Ala-135. Residue Asp-158 participates in substrate binding. Asp-158 serves as a coordination point for a divalent metal cation. Asp-160 contacts S-adenosyl-L-methionine. Residues Asp-184 and Asn-185 each contribute to the a divalent metal cation site. Asn-189 provides a ligand contact to substrate.

This sequence belongs to the class I-like SAM-binding methyltransferase superfamily. Cation-dependent O-methyltransferase family. CCoAMT subfamily. A divalent metal cation serves as cofactor.

The enzyme catalyses (E)-caffeoyl-CoA + S-adenosyl-L-methionine = (E)-feruloyl-CoA + S-adenosyl-L-homocysteine + H(+). It functions in the pathway aromatic compound metabolism; phenylpropanoid biosynthesis. Methylates caffeoyl-CoA to feruloyl-CoA and 5-hydroxyferuloyl-CoA to sinapoyl-CoA. Plays a role in the synthesis of feruloylated polysaccharides. Involved in the reinforcement of the plant cell wall. Also involved in the responding to wounding or pathogen challenge by the increased formation of cell wall-bound ferulic acid polymers. This Solanum tuberosum (Potato) protein is Caffeoyl-CoA O-methyltransferase (CCOAOMT).